Reading from the N-terminus, the 196-residue chain is 7-methyl-GTP pyrophosphatase (196 aa).

The Proton acceptor role is filled by D72.

It belongs to the Maf family. YceF subfamily. A divalent metal cation is required as a cofactor.

It localises to the cytoplasm. The enzyme catalyses N(7)-methyl-GTP + H2O = N(7)-methyl-GMP + diphosphate + H(+). Nucleoside triphosphate pyrophosphatase that hydrolyzes 7-methyl-GTP (m(7)GTP). May have a dual role in cell division arrest and in preventing the incorporation of modified nucleotides into cellular nucleic acids. This is 7-methyl-GTP pyrophosphatase from Neisseria meningitidis serogroup A / serotype 4A (strain DSM 15465 / Z2491).